The primary structure comprises 410 residues: MAREKFERSKPHVNIGTIGHVDHGKTTLTAAITMAMSVFSGAGAGKKYDEIDSAPEEKARGITINTAHVEYETENRHYAHVDCPGHADYVKNMITGAAQMDGAILVVSGADGPMPQTKEHLLLAKQVGVPKIVVFLNKKDQVDDDELLELVELEVRETLDNYEFDGDDIPIIPGSALLALEALIESPEAKKGDNEWVDCIYSLMENVDSYIPTPERDTDKPFLMAVEDVFSITGRGTVATGRVERGVVKIGDTVELVGLKDTTETTVTGLEMFQKTLDESVAGDNVGILLRGVQKENIQRGMVLAKPGSISPHTKFEAQVYVLTKEEGGRHTPFFPGYRPQFYVRTTDVTGKIESFVADDGSASQMVMPGDRVKMLVELINPIAVEKGMRFAIREGGRTVGAGVVSEILA.

The region spanning 10-215 (KPHVNIGTIG…NVDSYIPTPE (206 aa)) is the tr-type G domain. Residues 19-26 (GHVDHGKT) form a G1 region. Residue 19–26 (GHVDHGKT) coordinates GTP. Thr26 contributes to the Mg(2+) binding site. The tract at residues 61–65 (GITIN) is G2. Residues 82–85 (DCPG) are G3. Residues 82–86 (DCPGH) and 137–140 (NKKD) contribute to the GTP site. The tract at residues 137–140 (NKKD) is G4. The segment at 175–177 (SAL) is G5.

The protein belongs to the TRAFAC class translation factor GTPase superfamily. Classic translation factor GTPase family. EF-Tu/EF-1A subfamily.

The protein localises to the plastid. The protein resides in the chloroplast. The enzyme catalyses GTP + H2O = GDP + phosphate + H(+). Its function is as follows. GTP hydrolase that promotes the GTP-dependent binding of aminoacyl-tRNA to the A-site of ribosomes during protein biosynthesis. In Oltmannsiellopsis viridis (Marine flagellate), this protein is Elongation factor Tu, chloroplastic (tufA).